A 548-amino-acid chain; its full sequence is MRLRNGTFLTLLLFCLCAFLSLSWYAALSGQKGDVVDVYQREFLALRDRLHAAEQESLKRSKELNLVLDEIKRAVSERQALRDGDGNRTWGRLTEDPRLKPWNGSHRHVLHLPTVFHHLPHLLAKESSLQPAVRVGQGRTGVSVVMGIPSVRREVHSYLTDTLHSLISELSPQEKEDSVIVVLIAETDSQYTSAVTENIKALFPTEIHSGLLEVISPSPHFYPDFSRLRESFGDPKERVRWRTKQNLDYCFLMMYAQSKGIYYVQLEDDIVAKPNYLSTMKNFALQQPSEDWMILEFSQLGFIGKMFKSLDLSLIVEFILMFYRDKPIDWLLDHILWVKVCNPEKDAKHCDRQKANLRIRFKPSLFQHVGTHSSLAGKIQKLKDKDFGKQALRKEHVNPPAEVSTSLKTYQHFTLEKAYLREDFFWAFTPAAGDFIRFRFFQPLRLERFFFRSGNIEHPEDKLFNTSVEVLPFDNPQSDKEALQEGRTATLRYPRSPDGYLQIGSFYKGVAEGEVDPAFGPLEALRLSIQTDSPVWVILSEIFLKKAD.

The Cytoplasmic segment spans residues 1–7; it reads MRLRNGT. The helical; Signal-anchor for type II membrane protein transmembrane segment at 8 to 28 threads the bilayer; the sequence is FLTLLLFCLCAFLSLSWYAAL. The Lumenal portion of the chain corresponds to 29-548; the sequence is SGQKGDVVDV…LSEIFLKKAD (520 aa). Residues 36 to 83 are a coiled coil; the sequence is VDVYQREFLALRDRLHAAEQESLKRSKELNLVLDEIKRAVSERQALRD. Residues Asn87 and Asn103 are each glycosylated (N-linked (GlcNAc...) asparagine).

Belongs to the glycosyltransferase 54 family. As to quaternary structure, interacts with SLC35A3. Requires a divalent metal cation as cofactor. Post-translationally, N-glycosylated. Widely expressed. Strongly overexpressed in pancreatic cancer.

It is found in the golgi apparatus membrane. It carries out the reaction an N(4)-{beta-D-GlcNAc-(1-&gt;2)-alpha-D-Man-(1-&gt;3)-[alpha-D-Man-(1-&gt;6)]-beta-D-Man-(1-&gt;4)-beta-D-GlcNAc-(1-&gt;4)-beta-D-GlcNAc}-L-asparaginyl-[protein] + UDP-N-acetyl-alpha-D-glucosamine = an N(4)-{beta-D-GlcNAc-(1-&gt;2)-[beta-D-GlcNAc-(1-&gt;4)]-alpha-D-Man-(1-&gt;3)-[alpha-D-Man-(1-&gt;6)]-beta-D-Man-(1-&gt;4)-beta-D-GlcNAc-(1-&gt;4)-beta-D-GlcNAc}-L-asparaginyl-[protein] + UDP + H(+). The enzyme catalyses N(4)-{beta-D-GlcNAc-(1-&gt;2)-alpha-D-Man-(1-&gt;3)-[beta-D-GlcNAc-(1-&gt;2)-alpha-D-Man-(1-&gt;6)]-beta-D-Man-(1-&gt;4)-beta-D-GlcNAc-(1-&gt;4)-beta-D-GlcNAc}-L-asparaginyl-[protein] + UDP-N-acetyl-alpha-D-glucosamine = N(4)-{beta-D-GlcNAc-(1-&gt;2)-[beta-D-GlcNAc-(1-&gt;4)]-alpha-D-Man-(1-&gt;3)-[beta-D-GlcNAc-(1-&gt;2)-alpha-D-Man-(1-&gt;6)]-beta-D-Man-(1-&gt;4)-beta-D-GlcNAc-(1-&gt;4)-beta-D-GlcNAc}-L-asparaginyl-[protein] + UDP + H(+). It catalyses the reaction an N(4)-{beta-D-GlcNAc-(1-&gt;2)-alpha-D-Man-(1-&gt;3)-[beta-D-GlcNAc-(1-&gt;2)-[beta-D-GlcNAc-(1-&gt;6)]-alpha-D-Man-(1-&gt;6)]-beta-D-Man-(1-&gt;4)-beta-D-GlcNAc-(1-&gt;4)-beta-D-GlcNAc}-L-asparaginyl-[protein] + UDP-N-acetyl-alpha-D-glucosamine = an N(4)-{beta-D-GlcNAc-(1-&gt;2)-[beta-D-GlcNAc-(1-&gt;4)]-alpha-D-Man-(1-&gt;3)-[beta-D-GlcNAc-(1-&gt;2)-[beta-D-GlcNAc-(1-&gt;6)]-alpha-D-Man-(1-&gt;6)]-beta-D-Man-(1-&gt;4)-beta-D-GlcNAc-(1-&gt;4)-beta-D-GlcNAc}-L-asparaginyl-[protein] + UDP + H(+). The catalysed reaction is an N(4)-{beta-D-GlcNAc-(1-&gt;2)-alpha-D-Man-(1-&gt;3)-[beta-D-GlcNAc-(1-&gt;2)-alpha-D-Man-(1-&gt;6)]-beta-D-Man-(1-&gt;4)-beta-D-GlcNAc-(1-&gt;4)-[alpha-L-Fuc-(1-&gt;6)]-beta-D-GlcNAc}-L-asparaginyl-[protein] + UDP-N-acetyl-alpha-D-glucosamine = N(4)-{beta-D-GlcNAc-(1-&gt;2)-[beta-D-GlcNAc-(1-&gt;4)]-alpha-D-Man-(1-&gt;3)-[beta-D-GlcNAc-(1-&gt;2)-alpha-D-Man-(1-&gt;6)]-beta-D-Man-(1-&gt;4)-beta-D-GlcNAc-(1-&gt;4)-[alpha-L-Fuc-(1-&gt;6)]-beta-D-GlcNAc}-asparaginyl-[protein] + UDP + H(+). It carries out the reaction an N(4)-{beta-D-GlcNAc-(1-&gt;2)-alpha-D-Man-(1-&gt;3)-[beta-D-Gal-(1-&gt;4)-beta-D-GlcNAc-(1-&gt;2)-alpha-D-Man-(1-&gt;6)]-beta-D-Man-(1-&gt;4)-beta-D-GlcNAc-(1-&gt;4)-beta-D-GlcNAc}-L-asparaginyl-[protein] + UDP-N-acetyl-alpha-D-glucosamine = an N(4)-{beta-D-GlcNAc-(1-&gt;2)-[beta-D-GlcNAc-(1-&gt;4)]-alpha-D-Man-(1-&gt;3)-[beta-D-Gal-(1-&gt;4)-beta-D-GlcNAc-(1-&gt;2)-alpha-D-Man-(1-&gt;6)]-beta-D-Man-(1-&gt;4)-beta-D-GlcNAc-(1-&gt;4)-beta-D-GlcNAc}-L-asparaginyl-[protein] + UDP + H(+). The enzyme catalyses N(4)-{beta-D-GlcNAc-(1-&gt;2)-alpha-D-Man-(1-&gt;3)-[alpha-D-Man-(1-&gt;3)-{alpha-D-Man-(1-&gt;6)}-alpha-D-Man-(1-&gt;6)]-beta-D-Man-(1-&gt;4)-beta-D-GlcNAc-(1-&gt;4)-beta-D-GlcNAc}-asparaginyl-[protein] + UDP-N-acetyl-alpha-D-glucosamine = N(4)-{beta-D-GlcNAc-(1-&gt;2)-[beta-D-GlcNAc-(1-&gt;4)]-alpha-D-Man-(1-&gt;3)-[alpha-D-Man-(1-&gt;3)-{alpha-D-Man-(1-&gt;6)}-alpha-D-Man-(1-&gt;6)]-beta-D-Man-(1-&gt;4)-beta-D-GlcNAc-(1-&gt;4)-beta-D-GlcNAc}-asparaginyl-[protein] + UDP + H(+). It catalyses the reaction N(4)-{beta-D-GlcNAc-(1-&gt;2)-alpha-D-Man-(1-&gt;3)-beta-D-Man-(1-&gt;4)-beta-D-GlcNAc-(1-&gt;4)-beta-D-GlcNAc}-asparaginyl-[protein] + UDP-N-acetyl-alpha-D-glucosamine = N(4)-{beta-D-GlcNAc-(1-&gt;2)-[beta-D-GlcNAc-(1-&gt;4)]-alpha-D-Man-(1-&gt;3)-beta-D-Man-(1-&gt;4)-beta-D-GlcNAc-(1-&gt;4)-beta-D-GlcNAc}-asparaginyl-[protein] + UDP + H(+). The protein operates within protein modification; protein glycosylation. Its function is as follows. Glycosyltransferase that catalyzes the transfer of GlcNAc from UDP-GlcNAc to the GlcNAcbeta1-2Manalpha1-3 arm of the core structure of N-linked glycans through a beta1-4 linkage and participates in the production of tri- and tetra-antennary N-linked sugar chains. Prefers complex-type N-glycans over hybrid-types. Has lower affinities for donors or acceptors than MGAT4A, suggesting that, under physiological conditions, it is not the main contributor in N-glycan biosynthesis. The sequence is that of Alpha-1,3-mannosyl-glycoprotein 4-beta-N-acetylglucosaminyltransferase B from Homo sapiens (Human).